A 147-amino-acid polypeptide reads, in one-letter code: Small ribosomal subunit protein uS12 (147 aa).

This sequence belongs to the universal ribosomal protein uS12 family. As to quaternary structure, part of the 30S ribosomal subunit.

Functionally, with S4 and S5 plays an important role in translational accuracy. Located at the interface of the 30S and 50S subunits. The sequence is that of Small ribosomal subunit protein uS12 from Sulfurisphaera tokodaii (strain DSM 16993 / JCM 10545 / NBRC 100140 / 7) (Sulfolobus tokodaii).